We begin with the raw amino-acid sequence, 415 residues long: Putative F-box/FBD/LRR-repeat protein At3g49040 (415 aa).

One can recognise an F-box domain in the interval 10 to 58 (EDRISELHEALLVHIMSSLPTKTVVATSVLSKRWRHVWKTVQNLKFVSK). 5 LRR repeats span residues 60 to 86 (HQTFSEDVYRFFMLHKAPFLESLDLEF), 87 to 114 (SNQLDASDLGILVGIAFARHVRNLVLDL), 143 to 170 (TLTLKHSILLYFPYRVCLKSLRKLHLYK), 171 to 196 (VHFYGKDSVYNLLCGCPSLRDLIVHR), and 213 to 241 (RLTIEDSGFGYGCCYVINAPSLKYLNIRR). One can recognise an FBD domain in the interval 272–377 (ILESLTSAKR…TSLKKATFST (106 aa)).

This is Putative F-box/FBD/LRR-repeat protein At3g49040 from Arabidopsis thaliana (Mouse-ear cress).